The following is a 73-amino-acid chain: MWFCIDLGADAFKEAGVLAGKKNRRVLQYILGLNIFKRELIPPCKDPDPYQIQILLKNYILKNVSTVFTYYCQ.

It belongs to the asfivirus DP63R family.

This is an uncharacterized protein from Ornithodoros (relapsing fever ticks).